The following is a 276-amino-acid chain: Proteasome subunit beta type-8 (276 aa).

Positions methionine 1–glycine 72 are cleaved as a propeptide — removed in mature form. Threonine 73 acts as the Nucleophile in catalysis.

The protein belongs to the peptidase T1B family. The 26S proteasome consists of a 20S proteasome core and two 19S regulatory subunits. The 20S proteasome core is composed of 28 subunits that are arranged in four stacked rings, resulting in a barrel-shaped structure. The two end rings are each formed by seven alpha subunits, and the two central rings are each formed by seven beta subunits. The catalytic chamber with the active sites is on the inside of the barrel. Component of the immunoproteasome, where it displaces the equivalent housekeeping subunit PSMB5. Component of the spermatoproteasome, a form of the proteasome specifically found in testis. Directly interacts with POMP. Post-translationally, autocleaved. The resulting N-terminal Thr residue of the mature subunit is responsible for the nucleophile proteolytic activity.

It localises to the cytoplasm. The protein resides in the nucleus. It catalyses the reaction Cleavage of peptide bonds with very broad specificity.. In terms of biological role, the proteasome is a multicatalytic proteinase complex which is characterized by its ability to cleave peptides with Arg, Phe, Tyr, Leu, and Glu adjacent to the leaving group at neutral or slightly basic pH. The proteasome has an ATP-dependent proteolytic activity. This subunit is involved in antigen processing to generate class I binding peptides. May participate in the generation of spliced peptides resulting from the ligation of two separate proteasomal cleavage products that are not contiguous in the parental protein. Required for adipocyte differentiation. This is Proteasome subunit beta type-8 (PSMB8) from Canis lupus familiaris (Dog).